Here is a 328-residue protein sequence, read N- to C-terminus: tRNA uridine(34) hydroxylase (328 aa).

Residues 123–217 (SDPDVLLVDT…YLEEVPQEES (95 aa)) form the Rhodanese domain. Cys-177 serves as the catalytic Cysteine persulfide intermediate.

Belongs to the TrhO family.

It carries out the reaction uridine(34) in tRNA + AH2 + O2 = 5-hydroxyuridine(34) in tRNA + A + H2O. Functionally, catalyzes oxygen-dependent 5-hydroxyuridine (ho5U) modification at position 34 in tRNAs. The chain is tRNA uridine(34) hydroxylase from Psychromonas ingrahamii (strain DSM 17664 / CCUG 51855 / 37).